The primary structure comprises 189 residues: Glucose-6-phosphate isomerase (189 aa).

Fe cation-binding residues include histidine 88, histidine 90, glutamate 97, and histidine 136.

The protein belongs to the archaeal-type GPI family. In terms of assembly, homodimer.

The protein resides in the cytoplasm. The enzyme catalyses alpha-D-glucose 6-phosphate = beta-D-fructose 6-phosphate. It participates in carbohydrate degradation; glycolysis; D-glyceraldehyde 3-phosphate and glycerone phosphate from D-glucose: step 2/4. This chain is Glucose-6-phosphate isomerase, found in Thermococcus gammatolerans (strain DSM 15229 / JCM 11827 / EJ3).